The following is a 264-amino-acid chain: Phosphonoacetaldehyde hydrolase (264 aa).

Asp9 (nucleophile) is an active-site residue. Positions 9 and 11 each coordinate Mg(2+). Lys50 acts as the Schiff-base intermediate with substrate in catalysis. Asp183 serves as a coordination point for Mg(2+).

The protein belongs to the HAD-like hydrolase superfamily. PhnX family. Homodimer. It depends on Mg(2+) as a cofactor.

The catalysed reaction is phosphonoacetaldehyde + H2O = acetaldehyde + phosphate + H(+). Involved in phosphonate degradation. This is Phosphonoacetaldehyde hydrolase from Bacillus anthracis.